The following is a 132-amino-acid chain: Outer membrane protein RomA (132 aa).

The protein to M.tuberculosis Rv0906.

It is found in the cell outer membrane. This Klebsiella pneumoniae protein is Outer membrane protein RomA (romA).